The chain runs to 97 residues: Insertion element IS2 uncharacterized 11.1 kDa protein (97 aa).

The protein is Insertion element IS2 uncharacterized 11.1 kDa protein of Escherichia coli.